We begin with the raw amino-acid sequence, 85 residues long: Small ribosomal subunit protein bS18 (85 aa).

Belongs to the bacterial ribosomal protein bS18 family. Part of the 30S ribosomal subunit. Forms a tight heterodimer with protein bS6.

Functionally, binds as a heterodimer with protein bS6 to the central domain of the 16S rRNA, where it helps stabilize the platform of the 30S subunit. In Hyphomonas neptunium (strain ATCC 15444), this protein is Small ribosomal subunit protein bS18.